The chain runs to 154 residues: uncharacterized protein (154 aa).

The next 4 helical transmembrane spans lie at 20–42 (FRLF…GQFG), 62–84 (FFGY…AVLL), 91–109 (ALGA…LINY), and 113–132 (IGVQ…LLWM).

The protein localises to the cell membrane. This is an uncharacterized protein from Bacillus subtilis (strain 168).